Here is a 542-residue protein sequence, read N- to C-terminus: MFAFSKAPAGCSTYERVTQKFQDGSNKLRAAIEMDELTKQNGTINEKLQTAELYKQARQMLKEANEFNIMDIPESKRSEVREKREKTLNLEKSAQDRLIKICNEVDPNMKRASTAADPCRAARITPRNTRATVPGDKKVSKVKQTEKAPHVCSRGDRCGAHQPPPEKKSTPLKPVNQIRTRVKENKNPIGVQQQVFSFILSCCMRRNCRRPHYLFPCMISLKMNYFKFQATLPNQLNTVNRSNLLKGVDKAIGERLLDEILDSTGVRMDDVAGCHSAKATLEEAVILPALNPNLFSGLRQPVKGILLFGPPGNGKTLLAKAVAGESKQMFFNISASSLTSKWVGDSEKTIRGLFQIARNGQPSIIFIDEIDSILCERSEKDAEVSRRMKTEFLVQFDGATSSPDDRILVIGATNRPYELDDAVLRRFPKRIMLNLPDTEARKELITNTLKKHDMMDGLSSSDIRYIASNTSGFSNSDLVALCKEAAMVPVREIHRSKLSVTDGDKIRKIRASDFDTALRTIRPSTSDRILSKLSDFSRNFGC.

Positions 29–66 (RAAIEMDELTKQNGTINEKLQTAELYKQARQMLKEANE) form a coiled coil. The tract at residues 131–177 (ATVPGDKKVSKVKQTEKAPHVCSRGDRCGAHQPPPEKKSTPLKPVNQ) is disordered. Positions 135-169 (GDKKVSKVKQTEKAPHVCSRGDRCGAHQPPPEKKS) are enriched in basic and acidic residues. 309-316 (GPPGNGKT) is an ATP binding site.

Belongs to the AAA ATPase family. Spastin subfamily. In terms of assembly, homohexamer. The homohexamer is stabilized by ATP-binding. The homohexamer may adopt a ring conformation through which microtubules pass prior to being severed. Interacts with microtubules.

It is found in the cytoplasm. The protein localises to the cytoskeleton. The protein resides in the perinuclear region. The enzyme catalyses n ATP + n H2O + a microtubule = n ADP + n phosphate + (n+1) alpha/beta tubulin heterodimers.. Its function is as follows. Severs microtubules, probably in an ATP-dependent fashion. This is Probable spastin homolog spas-1 (spas-1) from Caenorhabditis briggsae.